The primary structure comprises 447 residues: 3-phosphoshikimate 1-carboxyvinyltransferase (447 aa).

Positions 1 to 22 (MTPSLKRLSGAMRARPAPALSG) are disordered. 3-phosphoshikimate is bound by residues lysine 30, serine 31, and arginine 35. Lysine 30 contributes to the phosphoenolpyruvate binding site. 2 residues coordinate phosphoenolpyruvate: glycine 102 and arginine 130. Residues serine 173, glutamine 175, aspartate 325, and lysine 352 each contribute to the 3-phosphoshikimate site. Residue glutamine 175 coordinates phosphoenolpyruvate. Aspartate 325 serves as the catalytic Proton acceptor. Phosphoenolpyruvate is bound by residues arginine 356 and arginine 401.

This sequence belongs to the EPSP synthase family. Monomer.

Its subcellular location is the cytoplasm. It catalyses the reaction 3-phosphoshikimate + phosphoenolpyruvate = 5-O-(1-carboxyvinyl)-3-phosphoshikimate + phosphate. Its pathway is metabolic intermediate biosynthesis; chorismate biosynthesis; chorismate from D-erythrose 4-phosphate and phosphoenolpyruvate: step 6/7. Functionally, catalyzes the transfer of the enolpyruvyl moiety of phosphoenolpyruvate (PEP) to the 5-hydroxyl of shikimate-3-phosphate (S3P) to produce enolpyruvyl shikimate-3-phosphate and inorganic phosphate. This chain is 3-phosphoshikimate 1-carboxyvinyltransferase, found in Maricaulis maris (strain MCS10) (Caulobacter maris).